The primary structure comprises 292 residues: Acetylglutamate kinase (292 aa).

Substrate-binding positions include 62 to 63 (GG), R84, and N188.

This sequence belongs to the acetylglutamate kinase family. ArgB subfamily.

The protein localises to the cytoplasm. The catalysed reaction is N-acetyl-L-glutamate + ATP = N-acetyl-L-glutamyl 5-phosphate + ADP. Its pathway is amino-acid biosynthesis; L-arginine biosynthesis; N(2)-acetyl-L-ornithine from L-glutamate: step 2/4. Functionally, catalyzes the ATP-dependent phosphorylation of N-acetyl-L-glutamate. The protein is Acetylglutamate kinase of Methanosarcina mazei (strain ATCC BAA-159 / DSM 3647 / Goe1 / Go1 / JCM 11833 / OCM 88) (Methanosarcina frisia).